Here is a 674-residue protein sequence, read N- to C-terminus: MQTSSSRSVHLSEWQKNYFAITSGICTGPKADAYRAQILRIQYAWANSEISQVCATKLFKKYAEKYSAIIDSDNVESGLNNYAENILTLAGSQQTDSDKWQSGLSINNVFKMSSVQKMMQAGKKFKDSLLEPALASVVIHKEATVFDLPKFSVCGSSQESDSLPNSAHDRDRTQDFPESNRLKLLQNAQPPMVTNTARTCPTFSAPVGESATAKFHVTPLFGNVKKENHSSAKENIGLNVFLSNQSCFPAACENPQRKSFYGSGTIDALSNPILNKACSKTEDNGPKEDSSLPTFKTAKEQLWVDQQKKYHQPQRASGSSYGGVKKSLGASRSRGILGKFVPPIPKQDGGEQNGGMQCKPYGAGPTEPAHPVDERLKNLEPKMIELIMNEIMDHGPPVNWEDIAGVEFAKATIKEIVVWPMLRPDIFTGLRGPPKGILLFGPPGTGKTLIGKCIASQSGATFFSISASSLTSKWVGEGEKMVRALFAVARCQQPAVIFIDEIDSLLSQRGDGEHESSRRIKTEFLVQLDGATTSSEDRILVVGATNRPQEIDEAARRRLVKRLYIPLPEASARKQIVINLMSKEQCCLSEEEIEQIVQQSDAFSGADMTQLCREASLGPIRSLQTADIATITPDQVRPIAYIDFENAFRTVRPSVSPKDLELYENWNKTFGCGK.

The segment at 157–179 is disordered; that stretch reads SQESDSLPNSAHDRDRTQDFPES. Residues 167–179 are compositionally biased toward basic and acidic residues; the sequence is AHDRDRTQDFPES. Lys225 participates in a covalent cross-link: Glycyl lysine isopeptide (Lys-Gly) (interchain with G-Cter in SUMO2). Ser259 bears the Phosphoserine mark. A necessary and sufficient for interaction with RAD51 region spans residues 295 to 344; that stretch reads FKTAKEQLWVDQQKKYHQPQRASGSSYGGVKKSLGASRSRGILGKFVPPI. Residue Lys339 is modified to N6-acetyllysine. ATP-binding positions include Ala404 and 444-449; that span reads GTGKTL.

The protein belongs to the AAA ATPase family. In terms of assembly, hexamer. Interacts (via N-terminal one-half region) with RAD51; the interaction is direct. Interacts (via N-terminal one-half region) with SPIDR (via the C-terminal region); the interaction is direct. Interacts with FIRRM; may regulate homologous recombination. Requires Mg(2+) as cofactor.

The protein resides in the nucleus. It localises to the cytoplasm. Its subcellular location is the perinuclear region. The enzyme catalyses ATP + H2O = ADP + phosphate + H(+). Functionally, involved in DNA double-strand break (DBS) repair via homologous recombination (HR). Recruited at DSB sites independently of BRCA2, RAD51 and RAD51 paralogs in a H2AX-dependent manner. May regulate osteoblast proliferation and differentiation. May play a role in the control of male meiosis dynamic. The chain is Fidgetin-like protein 1 (FIGNL1) from Homo sapiens (Human).